Consider the following 449-residue polypeptide: Probable glycosyltransferase 5 (449 aa).

The span at 1-14 shows a compositional bias: basic and acidic residues; it reads MMEKHGGKVTSDRR. Residues 1–24 form a disordered region; it reads MMEKHGGKVTSDRRAGRRQHGQRC. The Cytoplasmic segment spans residues 1–28; that stretch reads MMEKHGGKVTSDRRAGRRQHGQRCSASD. A helical; Signal-anchor for type II membrane protein membrane pass occupies residues 29–49; the sequence is AAPLVVVVILIVGALFLILGP. The Lumenal segment spans residues 50-449; that stretch reads TGSSSFTVPR…HPTFRAARPT (400 aa). Residues 74 to 109 form a disordered region; sequence APPPPPPPAQMQAGANASSEEDSGLPPPRQLTDPPY. N-linked (GlcNAc...) asparagine glycosylation is found at Asn89, Asn413, and Asn422.

This sequence belongs to the glycosyltransferase 34 family.

Its subcellular location is the golgi apparatus membrane. Functionally, probable glycosyltransferase that may be involved in the biosynthesis of xyloglucan. The protein is Probable glycosyltransferase 5 of Oryza sativa subsp. indica (Rice).